The following is a 330-amino-acid chain: Malate dehydrogenase (330 aa).

13–19 contacts NAD(+); the sequence is GAAGQIG. Substrate contacts are provided by Arg94 and Arg100. NAD(+) contacts are provided by residues Asn107, Gln114, and 131 to 133; that span reads VGN. Substrate-binding residues include Asn133 and Arg164. Residue His189 is the Proton acceptor of the active site.

It belongs to the LDH/MDH superfamily. MDH type 2 family.

The enzyme catalyses (S)-malate + NAD(+) = oxaloacetate + NADH + H(+). Its function is as follows. Catalyzes the reversible oxidation of malate to oxaloacetate. The protein is Malate dehydrogenase of Deinococcus deserti (strain DSM 17065 / CIP 109153 / LMG 22923 / VCD115).